Reading from the N-terminus, the 175-residue chain is uncharacterized protein (175 aa).

Residues 1–10 (MSKKINNNKT) show a composition bias toward polar residues. The segment at 1-21 (MSKKINNNKTPRNKVKNNNVS) is disordered.

This is an uncharacterized protein from Ureaplasma parvum serovar 3 (strain ATCC 700970).